The following is a 258-amino-acid chain: Ribosomal RNA small subunit methyltransferase J (258 aa).

Residues 123-124 (ER) and D177 each bind S-adenosyl-L-methionine. A disordered region spans residues 232–258 (IDGPKPSHSLEGKSSRYDIYPKKALKA). A compositionally biased stretch (basic and acidic residues) spans 239–252 (HSLEGKSSRYDIYP).

Belongs to the methyltransferase superfamily. RsmJ family.

The protein resides in the cytoplasm. The catalysed reaction is guanosine(1516) in 16S rRNA + S-adenosyl-L-methionine = N(2)-methylguanosine(1516) in 16S rRNA + S-adenosyl-L-homocysteine + H(+). In terms of biological role, specifically methylates the guanosine in position 1516 of 16S rRNA. The chain is Ribosomal RNA small subunit methyltransferase J from Pseudomonas putida (strain W619).